The sequence spans 425 residues: Tol-Pal system protein TolB (425 aa).

Positions Met1–Ala25 are cleaved as a signal peptide.

It belongs to the TolB family. In terms of assembly, the Tol-Pal system is composed of five core proteins: the inner membrane proteins TolA, TolQ and TolR, the periplasmic protein TolB and the outer membrane protein Pal. They form a network linking the inner and outer membranes and the peptidoglycan layer.

The protein resides in the periplasm. In terms of biological role, part of the Tol-Pal system, which plays a role in outer membrane invagination during cell division and is important for maintaining outer membrane integrity. This Acinetobacter baylyi (strain ATCC 33305 / BD413 / ADP1) protein is Tol-Pal system protein TolB.